A 31-amino-acid polypeptide reads, in one-letter code: Cytochrome b6-f complex subunit 6 (31 aa).

The helical transmembrane segment at 4 to 24 threads the bilayer; it reads VISYLSLLFISFLFALTLFIV.

Belongs to the PetL family. In terms of assembly, the 4 large subunits of the cytochrome b6-f complex are cytochrome b6, subunit IV (17 kDa polypeptide, PetD), cytochrome f and the Rieske protein, while the 4 small subunits are PetG, PetL, PetM and PetN. The complex functions as a dimer.

Its subcellular location is the plastid. The protein localises to the chloroplast thylakoid membrane. Functionally, component of the cytochrome b6-f complex, which mediates electron transfer between photosystem II (PSII) and photosystem I (PSI), cyclic electron flow around PSI, and state transitions. PetL is important for photoautotrophic growth as well as for electron transfer efficiency and stability of the cytochrome b6-f complex. The chain is Cytochrome b6-f complex subunit 6 from Chara vulgaris (Common stonewort).